Reading from the N-terminus, the 270-residue chain is Tetraspanin-2 (270 aa).

Topologically, residues Met1–Thr8 are cytoplasmic. A helical membrane pass occupies residues Ala9–Leu29. At Ala30 to Arg42 the chain is on the extracellular side. The chain crosses the membrane as a helical span at residues Trp43–Ala63. Topologically, residues Tyr64–Tyr74 are cytoplasmic. A helical membrane pass occupies residues Leu75–Val95. Residues Thr96–Asn232 are Extracellular-facing. The chain crosses the membrane as a helical span at residues Leu233–Phe253. The Cytoplasmic segment spans residues Arg254 to Val270.

Belongs to the tetraspanin (TM4SF) family.

The protein localises to the membrane. Functionally, may be involved in the regulation of cell differentiation. The sequence is that of Tetraspanin-2 (TET2) from Arabidopsis thaliana (Mouse-ear cress).